A 210-amino-acid chain; its full sequence is Somatotropin (210 aa).

A signal peptide spans 1-22 (MGQVFLLMPVLLVSCFLSQGAA). H38 is a Zn(2+) binding site. A disulfide bridge links C71 with C183. E192 is a Zn(2+) binding site. An intrachain disulfide couples C200 to C208.

Belongs to the somatotropin/prolactin family.

The protein resides in the secreted. Its function is as follows. Growth hormone plays an important role in growth control and is involved in the regulation of several anabolic processes. Implicated as an osmoregulatory substance important for seawater adaptation. This Salmo salar (Atlantic salmon) protein is Somatotropin (gh).